A 134-amino-acid polypeptide reads, in one-letter code: Large ribosomal subunit protein uL14 (134 aa).

The protein belongs to the universal ribosomal protein uL14 family. In the 70S ribosome, L14 and L19 interact and together make contacts with the 16S rRNA in bridges B5 and B8. Part of the 50S ribosomal subunit. Forms a cluster with proteins L3 and L19.

In terms of biological role, forms part of two intersubunit bridges in the 70S ribosome. Binds to 23S rRNA. In Deinococcus radiodurans (strain ATCC 13939 / DSM 20539 / JCM 16871 / CCUG 27074 / LMG 4051 / NBRC 15346 / NCIMB 9279 / VKM B-1422 / R1), this protein is Large ribosomal subunit protein uL14.